We begin with the raw amino-acid sequence, 193 residues long: Achaete-scute homolog 2 (193 aa).

Disordered stretches follow at residues 1-58 and 128-177; these read MDSR…RNER and PLPR…GALS. The 53-residue stretch at 50–102 folds into the bHLH domain; the sequence is AAVARRNERERNRVKLVNLGFQALRQHVPHGGASKKLSKVETLRSAVEYIRAL. Low complexity predominate over residues 128-152; it reads PLPRAPSGTPATAASPSCASSSPGR.

As to quaternary structure, efficient DNA binding requires dimerization with another basic helix-loop-helix (bHLH) protein. Forms heterodimers with bHLH transcription factor TCF3. May not heterodimerise with bHLH protein HAND1. Expressed in placenta.

The protein resides in the nucleus. In terms of biological role, transcription factor. Binds to E-box motifs 5'-CANNTG-3' in the regulatory elements of target genes, probably as a heterodimer with another basic helix-loop-helix (bHLH) protein such as the transcription factor TCF3. May bind both open and closed chromatin, acting as a pioneer transcription factor to allow other factors to bind and activate lineage-specific genes. Required during post-implantation development for the generation of some differentiated trophoblast cell types. Transcriptional activity of ASCL2 may be antagonised in a subset of trophoblast cells by bHLH transcription factor HAND1, perhaps by competing for dimerization with other bHLH proteins. Involved in differentiation and function of follicular T-helper (Tfh) cells, thereby playing a role in germinal center responses; probably modulates expression of genes involved in Tfh cell function, such as BCL6. May also act as a suppressor of Th1-, Th2- and Th17-cell differentiation. Induces the formation of stem cells in intestinal crypts in vitro, synergistically activating transcription of target genes, such as SOX9, together with TCF4/beta-catenin. May form a bistable transcriptional switch, controlling expression of its own gene together with Wnt/R-spondin signaling, and thereby maintaining stem cell characteristics. Modulates expression of target genes, including perhaps down-regulating EGR1/Krox24 and chemokine CXCL10/Mob-1 and up-regulating CXCR4 and CDKN1C/p57kip2, in Schwann cells. May play a role in reducing proliferation of Schwann cells, perhaps acting via modulation of expression of CDKN1C. May be dispensable for blastocyst formation and later embryonic function. May be involved in the determination of neuronal precursors. The protein is Achaete-scute homolog 2 (ASCL2) of Bos taurus (Bovine).